Here is a 402-residue protein sequence, read N- to C-terminus: Formate-dependent phosphoribosylglycinamide formyltransferase (402 aa).

N(1)-(5-phospho-beta-D-ribosyl)glycinamide is bound by residues 23 to 24 and Glu-83; that span reads EL. ATP-binding positions include Arg-116, Lys-157, 162–167, 197–200, and Glu-205; these read SSGKGQ and ESQI. The ATP-grasp domain occupies 121–316; sequence RLAAEELGLP…EFELHARAIL (196 aa). Mg(2+) is bound by residues Glu-275 and Glu-287. N(1)-(5-phospho-beta-D-ribosyl)glycinamide-binding positions include Asp-294, Lys-363, and 370–371; that span reads RR.

The protein belongs to the PurK/PurT family. Homodimer.

The catalysed reaction is N(1)-(5-phospho-beta-D-ribosyl)glycinamide + formate + ATP = N(2)-formyl-N(1)-(5-phospho-beta-D-ribosyl)glycinamide + ADP + phosphate + H(+). The protein operates within purine metabolism; IMP biosynthesis via de novo pathway; N(2)-formyl-N(1)-(5-phospho-D-ribosyl)glycinamide from N(1)-(5-phospho-D-ribosyl)glycinamide (formate route): step 1/1. Involved in the de novo purine biosynthesis. Catalyzes the transfer of formate to 5-phospho-ribosyl-glycinamide (GAR), producing 5-phospho-ribosyl-N-formylglycinamide (FGAR). Formate is provided by PurU via hydrolysis of 10-formyl-tetrahydrofolate. This chain is Formate-dependent phosphoribosylglycinamide formyltransferase, found in Acinetobacter baumannii (strain ATCC 17978 / DSM 105126 / CIP 53.77 / LMG 1025 / NCDC KC755 / 5377).